A 271-amino-acid polypeptide reads, in one-letter code: Elongation factor Ts (271 aa).

Residues 76 to 79 (TDFV) are involved in Mg(2+) ion dislocation from EF-Tu.

This sequence belongs to the EF-Ts family.

Its subcellular location is the cytoplasm. Associates with the EF-Tu.GDP complex and induces the exchange of GDP to GTP. It remains bound to the aminoacyl-tRNA.EF-Tu.GTP complex up to the GTP hydrolysis stage on the ribosome. The chain is Elongation factor Ts from Mycobacterium bovis (strain BCG / Pasteur 1173P2).